A 277-amino-acid chain; its full sequence is Small ribosomal subunit protein uS2 (277 aa).

The segment at 254–277 is disordered; it reads LAGAGSSALNDSGADLSEANPTEA.

This sequence belongs to the universal ribosomal protein uS2 family.

The chain is Small ribosomal subunit protein uS2 (rpsB) from Mycobacterium leprae (strain TN).